Reading from the N-terminus, the 1058-residue chain is Leucine-rich repeat and coiled-coil domain-containing protein PF3D7_0703800 (1058 aa).

The span at 1–10 (MAIKKKKKET) shows a compositional bias: basic residues. The tract at residues 1-34 (MAIKKKKKETKSKDNNNDNLRNEKKSTNLENGKY) is disordered. Positions 11–34 (KSKDNNNDNLRNEKKSTNLENGKY) are enriched in basic and acidic residues. Positions 515–544 (LKQLYTFIKNYENNNDKLNIKSQIINKDKN) form a coiled coil. Residues 641–661 (ENKDHLQHEEHTHEEEPKDAN) are compositionally biased toward basic and acidic residues. Disordered stretches follow at residues 641 to 665 (ENKDHLQHEEHTHEEEPKDANGDMV) and 706 to 728 (NIEDKSGDMENMKEPNGDMENMK). A coiled-coil region spans residues 872 to 905 (NYDHTQENILKNKNNMEDQNNLLEQNIMTDQLQN).

The sequence is that of Leucine-rich repeat and coiled-coil domain-containing protein PF3D7_0703800 from Plasmodium falciparum (isolate 3D7).